A 107-amino-acid chain; its full sequence is L-rhamnose mutarotase (107 aa).

Residue Tyr18 coordinates substrate. Catalysis depends on His22, which acts as the Proton donor. Residues Tyr41 and 76 to 77 (WW) each bind substrate.

The protein belongs to the rhamnose mutarotase family. As to quaternary structure, homodimer.

Its subcellular location is the cytoplasm. The enzyme catalyses alpha-L-rhamnose = beta-L-rhamnose. It participates in carbohydrate metabolism; L-rhamnose metabolism. Involved in the anomeric conversion of L-rhamnose. This is L-rhamnose mutarotase from Paraburkholderia phytofirmans (strain DSM 17436 / LMG 22146 / PsJN) (Burkholderia phytofirmans).